A 324-amino-acid chain; its full sequence is NADH-dependent D-xylose reductase (324 aa).

Catalysis depends on tyrosine 54, which acts as the Proton donor. Histidine 116 provides a ligand contact to substrate. 220-286 is an NAD(+) binding site; it reads SSFGPQSFLE…SNSPDRMAQN (67 aa).

The protein belongs to the aldo/keto reductase family.

It catalyses the reaction xylitol + NAD(+) = D-xylose + NADH + H(+). It carries out the reaction xylitol + NADP(+) = D-xylose + NADPH + H(+). The protein operates within carbohydrate metabolism; D-xylose degradation. Functionally, reduces D-xylose into xylitol. Preferentially utilizes NADH as a cosubstrate. This Candida parapsilosis (Yeast) protein is NADH-dependent D-xylose reductase (XYL1).